Reading from the N-terminus, the 204-residue chain is Large ribosomal subunit protein bL25 (204 aa).

This sequence belongs to the bacterial ribosomal protein bL25 family. CTC subfamily. In terms of assembly, part of the 50S ribosomal subunit; part of the 5S rRNA/L5/L18/L25 subcomplex. Contacts the 5S rRNA. Binds to the 5S rRNA independently of L5 and L18.

Its function is as follows. This is one of the proteins that binds to the 5S RNA in the ribosome where it forms part of the central protuberance. The chain is Large ribosomal subunit protein bL25 from Burkholderia pseudomallei (strain 668).